Reading from the N-terminus, the 211-residue chain is Calcipressin-like protein (211 aa).

Residues Ser-113 and Ser-117 each carry the phosphoserine modification. A Phosphothreonine modification is found at Thr-182.

The protein belongs to the RCAN family.

Functionally, inhibits calcineurin-dependent transcriptional responses by binding to the catalytic domain of calcineurin. In Saccharomyces cerevisiae (strain ATCC 204508 / S288c) (Baker's yeast), this protein is Calcipressin-like protein (RCN1).